A 294-amino-acid polypeptide reads, in one-letter code: Small ribosomal subunit protein uS2 (294 aa).

The disordered stretch occupies residues 254 to 294; it reads ESSNTEAPVAETAAAEAPVADAAIEAPVAEEAKTTEADDTK. The segment covering 259-282 has biased composition (low complexity); the sequence is EAPVAETAAAEAPVADAAIEAPVA. Positions 283 to 294 are enriched in basic and acidic residues; sequence EEAKTTEADDTK.

Belongs to the universal ribosomal protein uS2 family.

In Renibacterium salmoninarum (strain ATCC 33209 / DSM 20767 / JCM 11484 / NBRC 15589 / NCIMB 2235), this protein is Small ribosomal subunit protein uS2.